A 227-amino-acid polypeptide reads, in one-letter code: Cytochrome c oxidase subunit 2 (227 aa).

At 1–14 (MAYPFQLGLQDATS) the chain is on the mitochondrial intermembrane side. Residues 15 to 45 (PIMEELTNFHDHTLMIVFLISSLVLYIISLM) traverse the membrane as a helical segment. Over 46 to 59 (LTTKLTHTNTMDAQ) the chain is Mitochondrial matrix. A helical transmembrane segment spans residues 60–87 (EVETIWTILPAVILILIALPSLRILYMM). Residues 88 to 227 (DEINNPALTV…HFENWSASMI (140 aa)) lie on the Mitochondrial intermembrane side of the membrane. Residues H161, C196, E198, C200, H204, and M207 each contribute to the Cu cation site. E198 is a binding site for Mg(2+).

Belongs to the cytochrome c oxidase subunit 2 family. In terms of assembly, component of the cytochrome c oxidase (complex IV, CIV), a multisubunit enzyme composed of 14 subunits. The complex is composed of a catalytic core of 3 subunits MT-CO1, MT-CO2 and MT-CO3, encoded in the mitochondrial DNA, and 11 supernumerary subunits COX4I, COX5A, COX5B, COX6A, COX6B, COX6C, COX7A, COX7B, COX7C, COX8 and NDUFA4, which are encoded in the nuclear genome. The complex exists as a monomer or a dimer and forms supercomplexes (SCs) in the inner mitochondrial membrane with NADH-ubiquinone oxidoreductase (complex I, CI) and ubiquinol-cytochrome c oxidoreductase (cytochrome b-c1 complex, complex III, CIII), resulting in different assemblies (supercomplex SCI(1)III(2)IV(1) and megacomplex MCI(2)III(2)IV(2)). Found in a complex with TMEM177, COA6, COX18, COX20, SCO1 and SCO2. Interacts with TMEM177 in a COX20-dependent manner. Interacts with COX20. Interacts with COX16. Cu cation is required as a cofactor.

The protein resides in the mitochondrion inner membrane. The enzyme catalyses 4 Fe(II)-[cytochrome c] + O2 + 8 H(+)(in) = 4 Fe(III)-[cytochrome c] + 2 H2O + 4 H(+)(out). Its function is as follows. Component of the cytochrome c oxidase, the last enzyme in the mitochondrial electron transport chain which drives oxidative phosphorylation. The respiratory chain contains 3 multisubunit complexes succinate dehydrogenase (complex II, CII), ubiquinol-cytochrome c oxidoreductase (cytochrome b-c1 complex, complex III, CIII) and cytochrome c oxidase (complex IV, CIV), that cooperate to transfer electrons derived from NADH and succinate to molecular oxygen, creating an electrochemical gradient over the inner membrane that drives transmembrane transport and the ATP synthase. Cytochrome c oxidase is the component of the respiratory chain that catalyzes the reduction of oxygen to water. Electrons originating from reduced cytochrome c in the intermembrane space (IMS) are transferred via the dinuclear copper A center (CU(A)) of subunit 2 and heme A of subunit 1 to the active site in subunit 1, a binuclear center (BNC) formed by heme A3 and copper B (CU(B)). The BNC reduces molecular oxygen to 2 water molecules using 4 electrons from cytochrome c in the IMS and 4 protons from the mitochondrial matrix. In Sundamys muelleri (Mueller's giant sunda rat), this protein is Cytochrome c oxidase subunit 2 (MT-CO2).